The following is a 150-amino-acid chain: Small ribosomal subunit protein eS19S (150 aa).

The protein belongs to the eukaryotic ribosomal protein eS19 family.

The protein is Small ribosomal subunit protein eS19S (RPS19S) of Ascaris suum (Pig roundworm).